Consider the following 229-residue polypeptide: Enolase-phosphatase E1 (229 aa).

Positions 7 and 9 each coordinate Mg(2+). Residues 122–123 (SS) and Lys-161 each bind substrate. Asp-186 lines the Mg(2+) pocket.

The protein belongs to the HAD-like hydrolase superfamily. MasA/MtnC family. Monomer. Requires Mg(2+) as cofactor.

Its subcellular location is the cytoplasm. The protein localises to the nucleus. The catalysed reaction is 5-methylsulfanyl-2,3-dioxopentyl phosphate + H2O = 1,2-dihydroxy-5-(methylsulfanyl)pent-1-en-3-one + phosphate. The protein operates within amino-acid biosynthesis; L-methionine biosynthesis via salvage pathway; L-methionine from S-methyl-5-thio-alpha-D-ribose 1-phosphate: step 3/6. Its pathway is amino-acid biosynthesis; L-methionine biosynthesis via salvage pathway; L-methionine from S-methyl-5-thio-alpha-D-ribose 1-phosphate: step 4/6. Bifunctional enzyme that catalyzes the enolization of 2,3-diketo-5-methylthiopentyl-1-phosphate (DK-MTP-1-P) into the intermediate 2-hydroxy-3-keto-5-methylthiopentenyl-1-phosphate (HK-MTPenyl-1-P), which is then dephosphorylated to form the acireductone 1,2-dihydroxy-3-keto-5-methylthiopentene (DHK-MTPene). This is Enolase-phosphatase E1 from Clavispora lusitaniae (strain ATCC 42720) (Yeast).